The primary structure comprises 480 residues: Endothelial transcription factor GATA-2 (480 aa).

Residue Ser-73 is modified to Phosphoserine. Arg-86 is subject to Asymmetric dimethylarginine. Residues 166–208 (SGSHLFGFPPTPPKEVSPDPSTTGAASPASPSAGGSVARGEDK) form a disordered region. The segment covering 183-201 (PDPSTTGAASPASPSAGGS) has biased composition (low complexity). Ser-192 carries the phosphoserine modification. GATA-type zinc fingers lie at residues 295-319 (CVNCGATATPLWRRDGTGHYLCNAC) and 349-373 (CANCQTTTTTLWRRNANGDPVCNAC). Lys-389 participates in a covalent cross-link: Glycyl lysine isopeptide (Lys-Gly) (interchain with G-Cter in SUMO2). The segment at 457–480 (TPIHPSSSLSFGHPHPSSMVTAMG) is disordered.

As to quaternary structure, interacts with BRD3. Interacts with AR and CCAR1. Interacts with MDFIC.

The protein localises to the nucleus. Functionally, transcriptional activator which regulates endothelin-1 gene expression in endothelial cells. Binds to the consensus sequence 5'-AGATAG-3'. Plays an important role in the regulation of phagocytosis in alveolar macrophages, particularly during P.carinii infection. The polypeptide is Endothelial transcription factor GATA-2 (Rattus norvegicus (Rat)).